A 370-amino-acid chain; its full sequence is Peptide chain release factor 1 (370 aa).

Gln-239 carries the post-translational modification N5-methylglutamine.

Belongs to the prokaryotic/mitochondrial release factor family. In terms of processing, methylated by PrmC. Methylation increases the termination efficiency of RF1.

The protein resides in the cytoplasm. Peptide chain release factor 1 directs the termination of translation in response to the peptide chain termination codons UAG and UAA. This chain is Peptide chain release factor 1, found in Bacteroides thetaiotaomicron (strain ATCC 29148 / DSM 2079 / JCM 5827 / CCUG 10774 / NCTC 10582 / VPI-5482 / E50).